Consider the following 681-residue polypeptide: Secretion system apparatus protein SsaV (681 aa).

7 helical membrane passes run 24 to 44 (MVLA…LPTW), 48 to 68 (ILIT…IYLS), 73 to 93 (LSVF…LTIS), 118 to 138 (GNLT…FIVI), 206 to 226 (TIAG…IAIV), 244 to 264 (IGDG…AGII), and 295 to 315 (AVVL…LAFF).

This sequence belongs to the FHIPEP (flagella/HR/invasion proteins export pore) family.

The protein resides in the cell inner membrane. In terms of biological role, component of Salmonella pathogenicity island 2 (SPI-2) type III secretion system, required for secretion of some type III-secreted effectors including the SpvB exotoxin. This Salmonella typhimurium (strain 14028s / SGSC 2262) protein is Secretion system apparatus protein SsaV (ssaV).